The chain runs to 680 residues: Harmonin-binding protein USHBP1 (680 aa).

Residues 1-15 (MSARATRPRSRRGRH) show a composition bias toward basic residues. Disordered stretches follow at residues 1-51 (MSAR…YLGP) and 134-161 (KSVEAEDRDQGAPGPFGDEKEDAGPGQQ). Positions 179–218 (NREDELACTQASLQDAQAEKETLQRQVQELEDSLMQMEAS) form a coiled coil. Disordered stretches follow at residues 220–247 (PTPILRAGRRNSNSSTSGAERRPWVPQD) and 384–405 (TMEVETPQPSSEGSGVDKPTPE). Coiled coils occupy residues 363-386 (TKGDLQAAEKEASRLLMKKEATME) and 467-506 (QIQQDLAATRDRLADLVLRLQLTQREKRGLELREAALRAQ). The interval 524–549 (FAGDGSSGGSSEDPSSEEEAGEDRQQ) is disordered. Residues 573-662 (QELSASLARA…QAEELAVLTA (90 aa)) adopt a coiled-coil conformation.

Belongs to the MCC family. Interacts via its C-terminus with the first PDZ domain of USH1C.

The chain is Harmonin-binding protein USHBP1 from Mus musculus (Mouse).